A 369-amino-acid chain; its full sequence is Phenylalanine--tRNA ligase alpha subunit (369 aa).

Glu-269 lines the Mg(2+) pocket.

It belongs to the class-II aminoacyl-tRNA synthetase family. Phe-tRNA synthetase alpha subunit type 1 subfamily. As to quaternary structure, tetramer of two alpha and two beta subunits. Mg(2+) serves as cofactor.

It is found in the cytoplasm. The catalysed reaction is tRNA(Phe) + L-phenylalanine + ATP = L-phenylalanyl-tRNA(Phe) + AMP + diphosphate + H(+). In Brucella ovis (strain ATCC 25840 / 63/290 / NCTC 10512), this protein is Phenylalanine--tRNA ligase alpha subunit.